We begin with the raw amino-acid sequence, 122 residues long: Large ribosomal subunit protein uL14 (122 aa).

This sequence belongs to the universal ribosomal protein uL14 family. Part of the 50S ribosomal subunit. Forms a cluster with proteins L3 and L19. In the 70S ribosome, L14 and L19 interact and together make contacts with the 16S rRNA in bridges B5 and B8.

Binds to 23S rRNA. Forms part of two intersubunit bridges in the 70S ribosome. This is Large ribosomal subunit protein uL14 from Caldicellulosiruptor bescii (strain ATCC BAA-1888 / DSM 6725 / KCTC 15123 / Z-1320) (Anaerocellum thermophilum).